A 374-amino-acid chain; its full sequence is ATPase ASNA1 homolog (374 aa).

44–51 (KGGVGKTT) is an ATP binding site. Residue aspartate 73 is part of the active site. Positions 244 and 271 each coordinate ATP.

This sequence belongs to the arsA ATPase family. Homodimer.

It is found in the cytoplasm. Its subcellular location is the endoplasmic reticulum. Functionally, ATPase required for the post-translational delivery of tail-anchored (TA) proteins to the endoplasmic reticulum. Recognizes and selectively binds the transmembrane domain of TA proteins in the cytosol. This complex then targets to the endoplasmic reticulum by membrane-bound receptors, where the tail-anchored protein is released for insertion. This process is regulated by ATP binding and hydrolysis. ATP binding drives the homodimer towards the closed dimer state, facilitating recognition of newly synthesized TA membrane proteins. ATP hydrolysis is required for insertion. Subsequently, the homodimer reverts towards the open dimer state, lowering its affinity for the membrane-bound receptor, and returning it to the cytosol to initiate a new round of targeting. The sequence is that of ATPase ASNA1 homolog from Plasmodium vivax (strain Salvador I).